Consider the following 46-residue polypeptide: Protein PsbN (46 aa).

The helical transmembrane segment at 5–27 (TLVTLFVSGLLMSFTGYALYTAF) threads the bilayer.

It belongs to the PsbN family.

Its subcellular location is the plastid membrane. In terms of biological role, may play a role in photosystem I and II biogenesis. The protein is Protein PsbN of Cuscuta obtusiflora (Peruvian dodder).